A 306-amino-acid polypeptide reads, in one-letter code: Formimidoylglutamase (306 aa).

Positions 1–13 (MFQNATDWTPTST) are enriched in polar residues. Positions 1-36 (MFQNATDWTPTSTDPRDEQFGGVVEPVPTPSDADDY) are disordered. Mn(2+) is bound by residues N123, D147, H149, D151, D234, and D236.

Belongs to the arginase family. The cofactor is Mn(2+).

The enzyme catalyses N-formimidoyl-L-glutamate + H2O = formamide + L-glutamate. The protein operates within amino-acid degradation; L-histidine degradation into L-glutamate; L-glutamate from N-formimidoyl-L-glutamate (hydrolase route): step 1/1. Its function is as follows. Catalyzes the conversion of N-formimidoyl-L-glutamate to L-glutamate and formamide. The protein is Formimidoylglutamase of Halobacterium salinarum (strain ATCC 29341 / DSM 671 / R1).